We begin with the raw amino-acid sequence, 155 residues long: 6,7-dimethyl-8-ribityllumazine synthase (155 aa).

Residues Phe-24, 58 to 60 (AFE), and 82 to 84 (VII) each bind 5-amino-6-(D-ribitylamino)uracil. Residue 87-88 (ST) coordinates (2S)-2-hydroxy-3-oxobutyl phosphate. The Proton donor role is filled by His-90. Residue Phe-115 participates in 5-amino-6-(D-ribitylamino)uracil binding. Arg-129 contributes to the (2S)-2-hydroxy-3-oxobutyl phosphate binding site.

This sequence belongs to the DMRL synthase family.

It catalyses the reaction (2S)-2-hydroxy-3-oxobutyl phosphate + 5-amino-6-(D-ribitylamino)uracil = 6,7-dimethyl-8-(1-D-ribityl)lumazine + phosphate + 2 H2O + H(+). Its pathway is cofactor biosynthesis; riboflavin biosynthesis; riboflavin from 2-hydroxy-3-oxobutyl phosphate and 5-amino-6-(D-ribitylamino)uracil: step 1/2. Its function is as follows. Catalyzes the formation of 6,7-dimethyl-8-ribityllumazine by condensation of 5-amino-6-(D-ribitylamino)uracil with 3,4-dihydroxy-2-butanone 4-phosphate. This is the penultimate step in the biosynthesis of riboflavin. This is 6,7-dimethyl-8-ribityllumazine synthase from Chlorobium phaeobacteroides (strain DSM 266 / SMG 266 / 2430).